Consider the following 39-residue polypeptide: Photosystem II reaction center protein J (39 aa).

A helical membrane pass occupies residues 9–29 (LWLVATVGGIAVITVLGIFIY).

It belongs to the PsbJ family. As to quaternary structure, PSII is composed of 1 copy each of membrane proteins PsbA, PsbB, PsbC, PsbD, PsbE, PsbF, PsbH, PsbI, PsbJ, PsbK, PsbL, PsbM, PsbT, PsbX, PsbY, PsbZ, Psb30/Ycf12, at least 3 peripheral proteins of the oxygen-evolving complex and a large number of cofactors. It forms dimeric complexes.

Its subcellular location is the plastid. The protein localises to the chloroplast thylakoid membrane. One of the components of the core complex of photosystem II (PSII). PSII is a light-driven water:plastoquinone oxidoreductase that uses light energy to abstract electrons from H(2)O, generating O(2) and a proton gradient subsequently used for ATP formation. It consists of a core antenna complex that captures photons, and an electron transfer chain that converts photonic excitation into a charge separation. This chain is Photosystem II reaction center protein J, found in Gracilaria tenuistipitata var. liui (Red alga).